The chain runs to 348 residues: Mycothiol acetyltransferase (348 aa).

N-acetyltransferase domains are found at residues 12 to 156 (TSMR…VDVT) and 169 to 330 (VAVR…HGTP). Residue Glu44 coordinates 1D-myo-inositol 2-(L-cysteinylamino)-2-deoxy-alpha-D-glucopyranoside. 91-93 (LVV) contributes to the acetyl-CoA binding site. 1D-myo-inositol 2-(L-cysteinylamino)-2-deoxy-alpha-D-glucopyranoside contacts are provided by Glu196, Lys235, and Glu253. Residues 257-259 (VGV) and 264-270 (QGLGMGR) each bind acetyl-CoA. A 1D-myo-inositol 2-(L-cysteinylamino)-2-deoxy-alpha-D-glucopyranoside-binding site is contributed by Tyr291. 296 to 301 (NTVAVH) provides a ligand contact to acetyl-CoA. A disordered region spans residues 320 to 348 (PPAGSPAHGTPLVRVTDTPSSPGDATMGS). Positions 336–348 (DTPSSPGDATMGS) are enriched in polar residues.

The protein belongs to the acetyltransferase family. MshD subfamily. As to quaternary structure, monomer.

The enzyme catalyses 1D-myo-inositol 2-(L-cysteinylamino)-2-deoxy-alpha-D-glucopyranoside + acetyl-CoA = mycothiol + CoA + H(+). Functionally, catalyzes the transfer of acetyl from acetyl-CoA to desacetylmycothiol (Cys-GlcN-Ins) to form mycothiol. The polypeptide is Mycothiol acetyltransferase (Cellulomonas flavigena (strain ATCC 482 / DSM 20109 / BCRC 11376 / JCM 18109 / NBRC 3775 / NCIMB 8073 / NRS 134)).